The chain runs to 215 residues: Short neuropeptide F (215 aa).

An N-terminal signal peptide occupies residues 1-22 (MCRINFTTLSLILVLWSGSLMS). A propeptide spanning residues 23–56 (EPSQNADGSIKGLYEYLLQREYAAPVSYADHQIK) is cleaved from the precursor. Residues Phe69 and Phe101 each carry the phenylalanine amide modification. Trp129 is modified (tryptophan amide). Position 157 is a phenylalanine amide (Phe157). Residues 160-215 (SDPSWAMFNEHQLDEQQFADATRQPSKTLRGDEPTSIESTEQVESEENSPSNMDEK) constitute a propeptide that is removed on maturation. Residues 173-215 (DEQQFADATRQPSKTLRGDEPTSIESTEQVESEENSPSNMDEK) are disordered.

It belongs to the NPY family.

Its subcellular location is the secreted. Its function is as follows. Plays a role in controlling food intake and regulating body size. This chain is Short neuropeptide F, found in Aedes aegypti (Yellowfever mosquito).